Here is a 95-residue protein sequence, read N- to C-terminus: Ascorbate-specific PTS system EIIB component (95 aa).

The region spanning 1 to 95 (MENKNLHIIA…EIKQALSKVL (95 aa)) is the PTS EIIB type-2 domain. The Phosphocysteine intermediate role is filled by Cys-12. Cys-12 is modified (phosphocysteine).

The protein localises to the cytoplasm. The catalysed reaction is N(pros)-phospho-L-histidyl-[protein] + L-ascorbate(out) = L-ascorbate 6-phosphate(in) + L-histidyl-[protein]. The phosphoenolpyruvate-dependent sugar phosphotransferase system (sugar PTS), a major carbohydrate active transport system, catalyzes the phosphorylation of incoming sugar substrates concomitantly with their translocation across the cell membrane. The enzyme II UlaABC PTS system is involved in ascorbate transport. In Mycoplasma pneumoniae (strain ATCC 29342 / M129 / Subtype 1) (Mycoplasmoides pneumoniae), this protein is Ascorbate-specific PTS system EIIB component (ulaB).